We begin with the raw amino-acid sequence, 194 residues long: PLASMODESMATA CALLOSE-BINDING PROTEIN 2 (194 aa).

Residues 1–16 form the signal peptide; sequence MAPLVLYLLTLLMAGH. Cysteines 22 and 84 form a disulfide. Asn85 is a glycosylation site (N-linked (GlcNAc...) asparagine). The segment covering 106–116 has biased composition (low complexity); sequence SSASGSSGSGS. The segment at 106–140 is disordered; it reads SSASGSSGSGSTTVTPGKNSPKGSNSITTFPGGNS. Residues 117-140 show a composition bias toward polar residues; it reads TTVTPGKNSPKGSNSITTFPGGNS. An N-linked (GlcNAc...) asparagine glycan is attached at Asn154. The GPI-anchor amidated serine moiety is linked to residue Ser171. Positions 172 to 194 are cleaved as a propeptide — removed in mature form; sequence SGFALYYSNNLLLTGFCSLVMML.

Contains two additional disulfide bonds. In terms of tissue distribution, expressed in the shoot apical region and in young leaves but also detected in the laminar and vasculature of mature leaves.

The protein localises to the cell membrane. It localises to the cell junction. It is found in the plasmodesma. Functionally, able to bind (1-&gt;3)-beta-D-glucans (laminarin). This is PLASMODESMATA CALLOSE-BINDING PROTEIN 2 (PDCB2) from Arabidopsis thaliana (Mouse-ear cress).